We begin with the raw amino-acid sequence, 479 residues long: Poly(A) polymerase catalytic subunit (479 aa).

Active-site residues include D202 and D204. 3 residues coordinate Ca(2+): D202, D204, and D253.

It belongs to the poxviridae poly(A) polymerase catalytic subunit family. As to quaternary structure, heterodimer of a large (catalytic) subunit and a small (regulatory) subunit.

The enzyme catalyses RNA(n) + ATP = RNA(n)-3'-adenine ribonucleotide + diphosphate. Its function is as follows. Polymerase that creates the 3'-poly(A) tail of mRNA's. The sequence is that of Poly(A) polymerase catalytic subunit (OPG063) from Cowpox virus (strain GRI-90 / Grishak) (CPV).